The chain runs to 172 residues: MDYFTLFGLPIRYDVDGGLLASRFQALQRQFHPDRYAASPERERMLAVQQAATINNAYQALKHPLKRAEYMLSLHGFDVNNEQHTMKDTAFLMEQLELREELDAISQRSDADVALSAFAGRLQAMIVKRCSHMRDEFDNETWTDAADTVRKLRFLDKLQQQVEELEEQLLDR.

A J domain is found at 2–74 (DYFTLFGLPI…LKRAEYMLSL (73 aa)).

It belongs to the HscB family. In terms of assembly, interacts with HscA and stimulates its ATPase activity. Interacts with IscU.

Its function is as follows. Co-chaperone involved in the maturation of iron-sulfur cluster-containing proteins. Seems to help targeting proteins to be folded toward HscA. In Pectobacterium carotovorum subsp. carotovorum (strain PC1), this protein is Co-chaperone protein HscB.